A 338-amino-acid chain; its full sequence is UPF0104 membrane protein MTH_1261 (338 aa).

8 helical membrane-spanning segments follow: residues 6–26 (AILIVIGVVALAAMILIIGPG), 36–56 (DPVYVLMAVVLEFIILALFTL), 124–144 (LDTFPFIFLAVLTIIGIVLYF), 149–169 (WILAALIASVVIIVVAFFLAL), 231–251 (ISFLIWILEIIRVYLIFTAFG), 254–274 (ISLLVIAEVFILATLIGMIPL), 275–295 (LPGGLGAVDGIMIVFYSYAGV), and 310–330 (ISFWMISAMGVAAIPYFGSSV).

Belongs to the UPF0104 family.

The protein localises to the cell membrane. In Methanothermobacter thermautotrophicus (strain ATCC 29096 / DSM 1053 / JCM 10044 / NBRC 100330 / Delta H) (Methanobacterium thermoautotrophicum), this protein is UPF0104 membrane protein MTH_1261.